Reading from the N-terminus, the 114-residue chain is U17-barytoxin-Tl1d (114 aa).

The first 20 residues, Met1–Ala20, serve as a signal peptide directing secretion. Residues Asn21–Arg74 constitute a propeptide that is removed on maturation. Disulfide bonds link Cys75–Cys88, Cys82–Cys93, and Cys87–Cys108.

This sequence belongs to the neurotoxin 14 (magi-1) family. 03 (ICK-30-40) subfamily. Expressed by the venom gland.

Its subcellular location is the secreted. Its function is as follows. Ion channel inhibitor. The polypeptide is U17-barytoxin-Tl1d (Trittame loki (Brush-footed trapdoor spider)).